A 198-amino-acid chain; its full sequence is Endonuclease V (198 aa).

2 residues coordinate Mg(2+): D38 and D101.

Belongs to the endonuclease V family. It depends on Mg(2+) as a cofactor.

The protein localises to the cytoplasm. The catalysed reaction is Endonucleolytic cleavage at apurinic or apyrimidinic sites to products with a 5'-phosphate.. Functionally, DNA repair enzyme involved in the repair of deaminated bases. Selectively cleaves double-stranded DNA at the second phosphodiester bond 3' to a deoxyinosine leaving behind the intact lesion on the nicked DNA. This Saccharolobus islandicus (strain M.16.4 / Kamchatka #3) (Sulfolobus islandicus) protein is Endonuclease V.